The primary structure comprises 150 residues: MSEASGERPRVEIWTDGGCKPNPGPGGWGALLVCRGQEKELLGGDPETTNNRMELTAAAEALEALKRPCIVTLHTDSEYLRNGITRWHTGWVRRKWRNAAGDPVANMDLWQRILEAAKPHEIDWLWVKGHSGDENNERVDQLATRGREEL.

The RNase H type-1 domain maps to 7–148 (ERPRVEIWTD…VDQLATRGRE (142 aa)). Residues Asp16, Glu54, Asp76, and Asp140 each coordinate Mg(2+).

The protein belongs to the RNase H family. As to quaternary structure, monomer. Mg(2+) is required as a cofactor.

The protein resides in the cytoplasm. The catalysed reaction is Endonucleolytic cleavage to 5'-phosphomonoester.. Its function is as follows. Endonuclease that specifically degrades the RNA of RNA-DNA hybrids. In Gluconobacter oxydans (strain 621H) (Gluconobacter suboxydans), this protein is Ribonuclease H.